Reading from the N-terminus, the 119-residue chain is Acidic phospholipase A2 DE-II (119 aa).

Intrachain disulfides connect Cys11-Cys72, Cys26-Cys118, Cys28-Cys44, Cys43-Cys99, Cys50-Cys92, Cys60-Cys85, and Cys79-Cys90. Positions 27, 29, and 31 each coordinate Ca(2+). His47 is a catalytic residue. Position 48 (Asp48) interacts with Ca(2+). Residue Asp93 is part of the active site.

Belongs to the phospholipase A2 family. Group I subfamily. D49 sub-subfamily. It depends on Ca(2+) as a cofactor. In terms of tissue distribution, expressed by the venom gland.

The protein localises to the secreted. It carries out the reaction a 1,2-diacyl-sn-glycero-3-phosphocholine + H2O = a 1-acyl-sn-glycero-3-phosphocholine + a fatty acid + H(+). Functionally, PLA2 catalyzes the calcium-dependent hydrolysis of the 2-acyl groups in 3-sn-phosphoglycerides. In Naja melanoleuca (Forest cobra), this protein is Acidic phospholipase A2 DE-II.